The following is a 424-amino-acid chain: Serine--tRNA ligase (424 aa).

An L-serine-binding site is contributed by 231 to 233; sequence TAE. ATP is bound at residue 262 to 264; it reads RSE. Glu-285 contacts L-serine. 349 to 352 contributes to the ATP binding site; it reads EISS. L-serine is bound at residue Ser-385.

It belongs to the class-II aminoacyl-tRNA synthetase family. Type-1 seryl-tRNA synthetase subfamily. As to quaternary structure, homodimer. The tRNA molecule binds across the dimer.

Its subcellular location is the cytoplasm. It catalyses the reaction tRNA(Ser) + L-serine + ATP = L-seryl-tRNA(Ser) + AMP + diphosphate + H(+). The enzyme catalyses tRNA(Sec) + L-serine + ATP = L-seryl-tRNA(Sec) + AMP + diphosphate + H(+). It participates in aminoacyl-tRNA biosynthesis; selenocysteinyl-tRNA(Sec) biosynthesis; L-seryl-tRNA(Sec) from L-serine and tRNA(Sec): step 1/1. In terms of biological role, catalyzes the attachment of serine to tRNA(Ser). Is also able to aminoacylate tRNA(Sec) with serine, to form the misacylated tRNA L-seryl-tRNA(Sec), which will be further converted into selenocysteinyl-tRNA(Sec). In Bacillus cereus (strain ZK / E33L), this protein is Serine--tRNA ligase.